We begin with the raw amino-acid sequence, 394 residues long: MNKYKRIFLVVMDSVGIGEAPDAEQFGDLGSDTIGHIAEHMNGLHMPNMVKLGLGNIREMKGISKVEKPLGYYTKMQEKSTGKDTMTGHWEIMGLYIDTPFQVFPEGFPKELLDELEEKTGRKIIGNKPASGTEILDELGQEQMETGSLIVYTSADSVLQIAAHEEVVPLDELYKICKIARELTLDEKYMVGRVIARPFVGEPGNFTRTPNRHDYALKPFGRTVMNELKDSDYDVIAIGKISDIYDGEGVTESLRTKSNMDGMDKVVDTLNMDFTGLSFLNLVDFDALFGHRRDPQGYGEALQEYDARLPEVFEKLKEDDLLLITADHGNDPVHHGTDHTREYVPLLAYSPSMKEGGQELPLRQTFADIGATVAENFGVKMPEYGTSFLNELKK.

Mn(2+) is bound by residues D13, D286, H291, D327, H328, and H339.

It belongs to the phosphopentomutase family. Requires Mn(2+) as cofactor.

Its subcellular location is the cytoplasm. The catalysed reaction is 2-deoxy-alpha-D-ribose 1-phosphate = 2-deoxy-D-ribose 5-phosphate. It catalyses the reaction alpha-D-ribose 1-phosphate = D-ribose 5-phosphate. It participates in carbohydrate degradation; 2-deoxy-D-ribose 1-phosphate degradation; D-glyceraldehyde 3-phosphate and acetaldehyde from 2-deoxy-alpha-D-ribose 1-phosphate: step 1/2. Isomerase that catalyzes the conversion of deoxy-ribose 1-phosphate (dRib-1-P) and ribose 1-phosphate (Rib-1-P) to deoxy-ribose 5-phosphate (dRib-5-P) and ribose 5-phosphate (Rib-5-P), respectively. The chain is Phosphopentomutase from Bacillus anthracis (strain A0248).